The following is a 415-amino-acid chain: Interleukin-5 receptor subunit alpha (415 aa).

The first 17 residues, 1 to 17, serve as a signal peptide directing secretion; it reads MVPVLLILVGALATLQA. Residues 18-339 are Extracellular-facing; the sequence is DLLNHKKFLL…KERKSLVEWH (322 aa). The Fibronectin type-III 1 domain maps to 29–120; sequence PPVNFTIKAT…VSAELKAPPG (92 aa). Residues Asn-32 and Asn-128 are each glycosylated (N-linked (GlcNAc...) asparagine). Intrachain disulfides connect Cys-131-Cys-152 and Cys-179-Cys-193. Residues Asn-213 and Asn-241 are each glycosylated (N-linked (GlcNAc...) asparagine). Residues 238–331 form the Fibronectin type-III 2 domain; it reads PPRNVTVEIE…WSQPIYVGKE (94 aa). Cys-266 and Cys-313 are oxidised to a cystine. Residues 319–323 carry the WSXWS motif motif; it reads WGEWS. The helical transmembrane segment at 340-361 threads the bilayer; that stretch reads LIVLPTAACFVLLIFSLICRVC. The Cytoplasmic portion of the chain corresponds to 362–415; sequence HLWTRLFPPVPAPKSNIKDLPVVTEYEKPSNETKIEVVHCVEEVGFEVMGNSTF. The Box 1 motif signature appears at 367–375; sequence LFPPVPAPK.

As to quaternary structure, interacts with IL5. Interacts with CSF2RB. Interacts with JAK2. Interacts with SDCBP. As to expression, expressed on eosinophils and basophils. Also on B-cells.

Its subcellular location is the membrane. Cell surface receptor that plays an important role in the survival, differentiation, and chemotaxis of eosinophils. Acts by forming a heterodimeric receptor with CSF2RB subunit and subsequently binding to interleukin-5. In unstimulated conditions, interacts constitutively with JAK2. Heterodimeric receptor activation leads to JAK2 stimulation and subsequent activation of the JAK-STAT pathway. This is Interleukin-5 receptor subunit alpha (Il5ra) from Mus musculus (Mouse).